We begin with the raw amino-acid sequence, 963 residues long: MDEQALLGLNPNADSDFRQRALAYFEQLKISPDAWQVCAEALAQKTYSDDHVKFFCFQVLEHQVKYKYSELSTAQQQLIRETLLSWLQAQMQNPQPEKTFIRNKAAQVFALLFVTEYLTKWPKFFFDILSVVDLNPRGVDLYLRILMAIDSELVDRDVVHTSEASGLENTLIKDTMREQCIPNLVESWYQILHNYQYTNSEVLCQCLEVVGAYVSWIDLSLIANDRFINMLLGHMSVEVLREEACDCLFEIVNKGMDPVDKMKLVESLCQVLQTAGFFSIDQEEDLDFVARFSKLVNGMGQSLIVSWTKLIKNGAVKNAQEALEAIETKVPLMLQLLVHEDDDISSNIIGFCYDYLHILKQLPVLSDQQKANVEAIMLAVMKKLTYDEEYNFENEGEDEAMFVEYRKQLKLLLDRLAQVSPELVLASVRRVFSATLQNWQTTRFMEVEVAVRLLYMLAEALPVSHGAHFSGDVSKASALQDMMRTLVTSGVSSYQHTSVTLEFFETVVRYEKFFTVEPQHIPCVLMAFLDHRGLWHSSAKVRSRTAYLFSRFVKSLNKQMNPYIEEILNRIQDLLALSPPENGYQSLLSSDDQLFIYETAGALIVNSEYPAENKQALMKDLLTPLMERFKVLLEKLMMAQDEERQASLADSLNHAVGFASRTSKAFSNKQTVKQCGCSQVYLDCLQTFLPALSCPLQKDVLRSGVRTFLHRMIICLEEEVLPFIPSASEHMLKDCEAKDLQEFIPLINQITAKFKMQVSPFLQQMFMPLLHAIFEVLLRPAEDNDQSAALEKQMLRRSYFAFLQTVTGSGMSEVIANQGAENVEQVLVTIIQGAVDYPDPIAQKTCFIILSKLVELWGGKDGPVGFADFVYKHIVPACFLAPLKQTFDLADAQTVLALSECAVTLKTIHLKRGPECVQYLQQEYLPSLQVAPEIIQEFCQALQQPDAKVFKNYLKVFFQRAKP.

Position 1 is an N-acetylmethionine (Met1). Position 635 is an N6-acetyllysine (Lys635).

It belongs to the exportin family. Found in a complex with XPOT, Ran and tRNA. Probably found in a complex with nucleoporins. Interacts with Ran and tRNA in a GTP-dependent manner.

Its subcellular location is the nucleus. The protein resides in the cytoplasm. Its function is as follows. Mediates the nuclear export of aminoacylated tRNAs. In the nucleus binds to tRNA and to the GTPase Ran in its active GTP-bound form. Docking of this trimeric complex to the nuclear pore complex (NPC) is mediated through binding to nucleoporins. Upon transit of a nuclear export complex into the cytoplasm, disassembling of the complex and hydrolysis of Ran-GTP to Ran-GDP (induced by RANBP1 and RANGAP1, respectively) cause release of the tRNA from the export receptor. XPOT then return to the nuclear compartment and mediate another round of transport. The directionality of nuclear export is thought to be conferred by an asymmetric distribution of the GTP- and GDP-bound forms of Ran between the cytoplasm and nucleus. This is Exportin-T (Xpot) from Mus musculus (Mouse).